The primary structure comprises 633 residues: Chaperone protein DnaK (633 aa).

T198 is subject to Phosphothreonine; by autocatalysis.

This sequence belongs to the heat shock protein 70 family.

Its function is as follows. Acts as a chaperone. This Rhodopseudomonas palustris (strain BisA53) protein is Chaperone protein DnaK.